Here is a 753-residue protein sequence, read N- to C-terminus: Probable phosphoenolpyruvate synthase (753 aa).

The active-site Tele-phosphohistidine intermediate is the His-398. Residues Arg-488, Arg-535, Glu-631, Gly-653, Thr-654, Asn-655, and Asp-656 each contribute to the substrate site. Glu-631 is a Mg(2+) binding site. Asp-656 contributes to the Mg(2+) binding site. The active-site Proton donor is Cys-703.

This sequence belongs to the PEP-utilizing enzyme family. It depends on Mg(2+) as a cofactor.

The catalysed reaction is pyruvate + ATP + H2O = phosphoenolpyruvate + AMP + phosphate + 2 H(+). It functions in the pathway carbohydrate biosynthesis; gluconeogenesis. Its function is as follows. Catalyzes the phosphorylation of pyruvate to phosphoenolpyruvate. This is Probable phosphoenolpyruvate synthase (ppsA) from Archaeoglobus fulgidus (strain ATCC 49558 / DSM 4304 / JCM 9628 / NBRC 100126 / VC-16).